A 377-amino-acid polypeptide reads, in one-letter code: MTQSQQVSADPAPLRTPADYQAQLDEKRERLCGLFADFTLPALEVHASPAEHYRMRAEFRIWHDGDDLYHCMYAPATKEIIRVDQFPTASRLINQLMPVLLEGLRPHPVLRRKLFQIDYLSTQSGQICVSLLYHRKLESEWQQAAEALQADLRAKGFELQLIGRAHKQKICLGEEFVIERLTVQGRQLVYKQVENSFTQPNAAINEQMLGWALDVTKGSEGDLLELYCGNGNFSIALAQNFRKVLATEIAKPSVDSAQFNIAANGVDNLIILRMSAEEFTMAMRGEREFNRLKGVDLGAYQCNTIFVDPPRAGLDDATVKLVQDYDNILYISCNPETLQANMAVLGETHEIARFALFDQFPWTHHMEAGVYLKRKAG.

Residues Gln199, Tyr227, Asn232, Glu248, and Asp308 each contribute to the S-adenosyl-L-methionine site. The Nucleophile role is filled by Cys333. The active-site Proton acceptor is Glu367.

This sequence belongs to the class I-like SAM-binding methyltransferase superfamily. RNA M5U methyltransferase family. TrmA subfamily.

It carries out the reaction uridine(54) in tRNA + S-adenosyl-L-methionine = 5-methyluridine(54) in tRNA + S-adenosyl-L-homocysteine + H(+). The catalysed reaction is uridine(341) in tmRNA + S-adenosyl-L-methionine = 5-methyluridine(341) in tmRNA + S-adenosyl-L-homocysteine + H(+). Functionally, dual-specificity methyltransferase that catalyzes the formation of 5-methyluridine at position 54 (m5U54) in all tRNAs, and that of position 341 (m5U341) in tmRNA (transfer-mRNA). In Aeromonas hydrophila subsp. hydrophila (strain ATCC 7966 / DSM 30187 / BCRC 13018 / CCUG 14551 / JCM 1027 / KCTC 2358 / NCIMB 9240 / NCTC 8049), this protein is tRNA/tmRNA (uracil-C(5))-methyltransferase.